The chain runs to 181 residues: Adenine phosphoribosyltransferase (181 aa).

This sequence belongs to the purine/pyrimidine phosphoribosyltransferase family. As to quaternary structure, homodimer.

It localises to the cytoplasm. It catalyses the reaction AMP + diphosphate = 5-phospho-alpha-D-ribose 1-diphosphate + adenine. It functions in the pathway purine metabolism; AMP biosynthesis via salvage pathway; AMP from adenine: step 1/1. In terms of biological role, catalyzes a salvage reaction resulting in the formation of AMP, that is energically less costly than de novo synthesis. The polypeptide is Adenine phosphoribosyltransferase (Shewanella loihica (strain ATCC BAA-1088 / PV-4)).